The following is a 947-amino-acid chain: MENPFASREKGFGNYSDFPTEQMDGLSSNFGSGVRNLISDDMFNPSSELMNFDSLAAWCNSPSATDILFAQYGLSNSQPMPFGAFTSFHVADPKATSLTRSFYDLESSYYGEERSSAQEMNSQFHRSSDSDELSGKRRKVVNQKIGFPNVLNCTIPRSLSHSLDEKMLKALSLFMESSGSGEGILAQVWTPIKTGDQYLLSTCDQAYLLDPRFSQYREVSRRFTFAAEANQCSFPGLPGRVFISGVPEWTSNVMYYKTDEYLRMKHAIDNEVRGSIAIPILEASGTSCCAVMELVTSKEKPNFDMEMDSVCRALQAVNLRTAAIPRPQYLSSSQRDALAEIQDVLRTVCHAHKLPLALAWIPCRKDQSIRVSGQKSGENCILCIEETACYVNDMEMEGFVHACLEHCLREKEGIVGKAFISNQPFFSSDVKAYDISEYPIVQHARKYGLNAAVAIKLRSTYTGEDDYILELFLPVSMKGSLEQQLLLDSLSGTMQRICRTLRTVSEVGSTKKEGTKPGFRSSDMSNFPQTTSSENFQTISLDSEFNSTRSMFSGMSSDKENSITVSQGTLEQDVSKARTPEKKKSTTEKNVSLSALQQHFSGSLKDAAKSLGGETSAYFQAWVYFFCPTTLKRICRQHGIMRWPSRKINKVNRSLRKIQTVLDSVQGVEGGLKFDSATGEFIAVRPFIQEIDTQKGLSSLDNDAHARRSQEDMPDDTSFKLQEAKSVDNAIKLEEDTTMNQARPGSFMEVNASGQPWAWMAKESGLNGSEGIKSVCNLSSVEISDGMDPTIRCSGSIVEPNQSMSCSISDSSNGSGAVLRGSSSTSMEDWNQMRTHNSNSSESGSTTLIVKASYREDTVRFKFEPSVGCPQLYKEVGKRFKLQDGSFQLKYLDDEEEWVMLVTDSDLQECLEILHGMGKHSVKFLVRDLSAPLGSSGGSNGYLGTGL.

Disordered stretches follow at residues 114 to 135 (RSSA…ELSG), 509 to 533 (STKK…TTSS), and 550 to 591 (SMFS…EKNV). The segment covering 126 to 135 (RSSDSDELSG) has biased composition (basic and acidic residues). 2 stretches are compositionally biased toward polar residues: residues 522-533 (SDMSNFPQTTSS) and 550-572 (SMFS…TLEQ). The segment covering 573–587 (DVSKARTPEKKKSTT) has biased composition (basic and acidic residues). Residues 577–671 (ARTPEKKKST…LDSVQGVEGG (95 aa)) form the RWP-RK domain. Residues 646-666 (RKINKVNRSLRKIQTVLDSVQ) are a coiled coil. The segment covering 805-815 (SCSISDSSNGS) has biased composition (low complexity). Residues 805-828 (SCSISDSSNGSGAVLRGSSSTSME) are disordered. Positions 847 to 929 (TLIVKASYRE…HSVKFLVRDL (83 aa)) constitute a PB1 domain.

The protein resides in the nucleus. In terms of biological role, probable transcription factor. This chain is Protein NLP8 (NLP8), found in Arabidopsis thaliana (Mouse-ear cress).